Here is a 315-residue protein sequence, read N- to C-terminus: Glycine--tRNA ligase alpha subunit (315 aa).

This sequence belongs to the class-II aminoacyl-tRNA synthetase family. As to quaternary structure, tetramer of two alpha and two beta subunits.

It is found in the cytoplasm. It carries out the reaction tRNA(Gly) + glycine + ATP = glycyl-tRNA(Gly) + AMP + diphosphate. In Ectopseudomonas mendocina (strain ymp) (Pseudomonas mendocina), this protein is Glycine--tRNA ligase alpha subunit.